Here is a 105-residue protein sequence, read N- to C-terminus: MSEFEVQVVNKRWNPLAEREELDLVLVHVAKPTPSRCEVEEKVAQMLGVDKKLVVVTKLLSEYGIGRTRARAHVYKNYERLQKLEPEKVKKLHEQCSQAQEAQAQ.

This sequence belongs to the eukaryotic ribosomal protein eS24 family.

This Ignicoccus hospitalis (strain KIN4/I / DSM 18386 / JCM 14125) protein is Small ribosomal subunit protein eS24.